Reading from the N-terminus, the 137-residue chain is Acidic phospholipase A2 beta-bungarotoxin A6 chain (137 aa).

An N-terminal signal peptide occupies residues 1–9 (AVCVSLLGA). Positions 10-17 (ANIPPQHL) are excised as a propeptide. Disulfide bonds link C44–C136, C46–C62, C61–C117, C68–C110, C78–C103, and C96–C108. 3 residues coordinate Ca(2+): Y45, G47, and G49. The active site involves H65. D66 is a binding site for Ca(2+). D111 is an active-site residue.

This sequence belongs to the phospholipase A2 family. Group I subfamily. D49 sub-subfamily. In terms of assembly, heterodimer; disulfide-linked. The A chains have phospholipase A2 activity and the B chains show homology with the basic protease inhibitors. It depends on Ca(2+) as a cofactor. In terms of tissue distribution, expressed by the venom gland.

Its subcellular location is the secreted. The catalysed reaction is a 1,2-diacyl-sn-glycero-3-phosphocholine + H2O = a 1-acyl-sn-glycero-3-phosphocholine + a fatty acid + H(+). Snake venom phospholipase A2 (PLA2) that inhibits neuromuscular transmission by blocking acetylcholine release from the nerve termini. PLA2 catalyzes the calcium-dependent hydrolysis of the 2-acyl groups in 3-sn-phosphoglycerides. In Bungarus multicinctus (Many-banded krait), this protein is Acidic phospholipase A2 beta-bungarotoxin A6 chain.